Reading from the N-terminus, the 446-residue chain is Elongation factor Ts, mitochondrial (446 aa).

Residues 1 to 33 (MSGSRSALSVVRLAACAKPCTLGSTSSVLTRPF) constitute a mitochondrion transit peptide.

It belongs to the EF-Ts family.

It localises to the mitochondrion. In terms of biological role, associates with the EF-Tu.GDP complex and induces the exchange of GDP to GTP. It remains bound to the aminoacyl-tRNA.EF-Tu.GTP complex up to the GTP hydrolysis stage on the ribosome. The sequence is that of Elongation factor Ts, mitochondrial from Mycosarcoma maydis (Corn smut fungus).